The primary structure comprises 385 residues: Transcription factor TGAL3 (385 aa).

Positions 62–113 are disordered; the sequence is LHALVGGGDGGDDAGEQRGADSSAVSKERRGDQKMQRRLAQNREAARKSRMR. Basic and acidic residues predominate over residues 87-96; it reads SKERRGDQKM. The bZIP domain maps to 93–137; that stretch reads DQKMQRRLAQNREAARKSRMRKKAYIQQLESSRSKLMHLEQELQR. The basic motif stretch occupies residues 95-115; sequence KMQRRLAQNREAARKSRMRKK. Residues 121–135 are leucine-zipper; the sequence is LESSRSKLMHLEQEL. Positions 162–382 constitute a DOG1 domain; sequence TLAFDLEYAR…RALSSLWLAR (221 aa).

Belongs to the bZIP family. In terms of assembly, interacts with NPR1/NH1, NPR2/NH2 and NPR3/NH3.

Its subcellular location is the nucleus. Its function is as follows. Transcriptional regulator involved in defense response. In Oryza sativa subsp. japonica (Rice), this protein is Transcription factor TGAL3.